Reading from the N-terminus, the 5289-residue chain is MGLPLARLAAVCLALSLAGGSELQTEGRTRNHGHNVCSTWGNFHYKTFDGDVFRFPGLCDYNFASDCRGSYKEFAVHLKRGPGQAEAPAGVESILLTIKDDTIYLTRHLAVLNGAVVSTPHYSPGLLIEKSDAYTKVYSRAGLTLMWNREDALMLELDTKFRNHTCGLCGDYNGLQSYSEFLSDGVLFSPLEFGNMQKINQPDVVCEDPEEEVAPASCSEHRAECERLLTAEAFADCQDLVPLEPYLRACQQDRCRCPGGDTCVCSTVAEFSRQCSHAGGRPGNWRTATLCPKTCPGNLVYLESGSPCMDTCSHLEVSSLCEEHRMDGCFCPEGTVYDDIGDSGCVPVSQCHCRLHGHLYTPGQEITNDCEQCVCNAGRWVCKDLPCPGTCALEGGSHITTFDGKTYTFHGDCYYVLAKGDHNDSYALLGELAPCGSTDKQTCLKTVVLLADKKKNVVVFKSDGSVLLNELQVNLPHVTASFSVFRPSSYHIMVSMAIGVRLQVQLAPVMQLFVTLDQASQGQVQGLCGNFNGLEGDDFKTASGLVEATGAGFANTWKAQSSCHDKLDWLDDPCSLNIESANYAEHWCSLLKKTETPFGRCHSAVDPAEYYKRCKYDTCNCQNNEDCLCAALSSYARACTAKGVMLWGWREHVCNKDVGSCPNSQVFLYNLTTCQQTCRSLSEADSHCLEGFAPVDGCGCPDHTFLDEKGRCVPLAKCSCYHRGLYLEAGDVVVRQEERCVCRDGRLHCRQIRLIGQSCTAPKIHMDCSNLTALATSKPRALSCQTLAAGYYHTECVSGCVCPDGLMDDGRGGCVVEKECPCVHNNDLYSSGAKIKVDCNTCTCKRGRWVCTQAVCHGTCSIYGSGHYITFDGKYYDFDGHCSYVAVQDYCGQNSSLGSFSIITENVPCGTTGVTCSKAIKIFMGRTELKLEDKHRVVIQRDEGHHVAYTTREVGQYLVVESSTGIIVIWDKRTTVFIKLAPSYKGTVCGLCGNFDHRSNNDFTTRDHMVVSSELDFGNSWKEAPTCPDVSTNPEPCSLNPHRRSWAEKQCSILKSSVFSICHSKVDPKPFYEACVHDSCSCDTGGDCECFCSAVASYAQECTKEGACVFWRTPDLCPIFCDYYNPPHECEWHYEPCGNRSFETCRTINGIHSNISVSYLEGCYPRCPKDRPIYEEDLKKCVTADKCGCYVEDTHYPPGASVPTEETCKSCVCTNSSQVVCRPEEGKILNQTQDGAFCYWEICGPNGTVEKHFNICSITTRPSTLTTFTTITLPTTPTTFTTTTTTTTPTSSTVLSTTPKLCCLWSDWINEDHPSSGSDDGDRETFDGVCGAPEDIECRSVKDPHLSLEQLGQKVQCDVSVGFICKNEDQFGNGPFGLCYDYKIRVNCCWPMDKCITTPSPPTTTPSPPPTSTTTLPPTTTPSPPTTTTTTPPPTTTPSPPITTTTTPPPTTTPSPPISTTTTPPPTTTPSPPTTTPSPPTTTPSPPTTTTTTPPPTTTPSPPTTTPITPPASTTTLPPTTTPSPPTTTTTTPPPTTTPSPPTTTPITPPTSTTTLPPTTTPSPPPTTTTTPPPTTTPSPPTTTTPSPPTITTTTPPPTTTPSPPTTTTTTPPPTTTPSPPTTTPITPPTSTTTLPPTTTPSPPPTTTTTPPPTTTPSPPTTTTPSPPITTTTTPPPTTTPSSPITTTPSPPTTTMTTPSPTTTPSSPITTTTTPSSTTTPSPPPTTMTTPSPTTTPSPPTTTMTTLPPTTTSSPLTTTPLPPSITPPTFSPFSTTTPTTPCVPLCNWTGWLDSGKPNFHKPGGDTELIGDVCGPGWAANISCRATMYPDVPIGQLGQTVVCDVSVGLICKNEDQKPGGVIPMAFCLNYEINVQCCECVTQPTTMTTTTTENPTPTPITTTTTVTPTPTPTSTQSTTPTPITTTNTVTPTPTPTGTQTPTPTPITTTTTMVTPTPTITSTQTPTPTPITTTTVTPTPTPTSTQRTTPTSITTTTTVTPTPTPTGTQTPTTTPITTTTTVTPTPTPTGTQTPTTTPISTTTMVTPTPTPTGTQTLTPTPITTTTTVTPTPTPTGTQTPTSTPISTTTTVTPTPTPTGTQTPTLTPITTTTTVTPTPTPTGTQTPTTTPITTTTTVTPTPTPTGTKSTTPTSITTTTMVTPTPPPTGTQTPTTTPITTTTTVTPTPTPTGTQTPTPTPITTTTTVTPTPTPTGTQTPTSTPITTNTTVTPTPTPTGTPSTTLTPITTTTMVTPTPTPTGTQTPTSTPISTTTTVTPTPTPTGTQTPTPTPISTTTTVTPTPTPTSTQTPTTTPITTTTTVTPNPTPTGTQTPTTTPITTTTTVTPTPTPTGTQTPTTTPISTTTTVTPTPTPTGTQTPTTTAITTTTTVTPTPTPTGTQTPTSTPITTTTTVTPTPTPTGTQTPTSTPISNTTTVTPTPTPTGTQTPTVTPITTTTTVTPTRTPTGTKSTTPTSITTTTMVTPTPTPTGTHTPTTTPITTTTTVTPTPTPTGTQTPTPTPITTTTTVTPTPTPTGTQTPTSTPITTTTTVTPTPTPTGTQTPTTTPITTNTTVTPTPTPTGTQTPTTVLITTTTTMTPTPTPTSTKSTTVTPITTTTTVTPTPTPTGTQSTTLTPITTTTTVTPTPTPTGTQTPTTTPISTTTTVIPTPTPTGTQTPTSTPITTTTTVTPTPTPTGTQTPTSTPISTTTTVTPTATPTGTQTPTLTPITTTTTVTSTPTPTGTQTPTPTPITTTTTVTPTPTPTSTQTPTSTPITTTTTVTPTPTPTGTQTPTTTHITTTTTVTPTPTPTGTQAPTPTAITTTTTVTPTPTPTGTQTPTTTPITTTTTVTPTPTPTGTQSPTPTAITTTTTVTPTPTPTGTQTPTTTPITTTTTVTPTPTPTGTQSTTLTPITTTTTVTPIPTPTGTQTPTSTPITTTITVTPTPTPTGTQTPTPTPISTTTTVTPTPTPTGTQTPTTTPITTTTTVTPTPTPTGTQTPTTTPISTTTTVTPTPTPTGTQTPTSTPITTTTTVTPTPTPTGTQTPTPTPITTTTTVTPTPTPTGTQTPTSTPITTTTTVTPTPTPTGTQTPTPTPITTTTTVTPTPTPTGTQTPTSTPITTTTTVTPTPTPTGTQTPTTTPITTTTTVTPTPTPTGTQSTTLTPITTTTTVTPTPTPTGTQTPTSTPITTTTTVTPTPTGTQTPTPTPISTTTTVTPTPTPTGTQTPTMTPITTTTTVTPTPTPTGTQTPTTTPISTTTTVTPTPTPTGTQTPTSTPITTTTTVTPTPTPTGTQTPTTTPITTTTTVTPTPTPTGTQSTTLTPITTTTTVTPTPTPTGTQTPTPTPISTTTTVTPTPTPTGTQTPTTTPITTTTTVTPTPTPTGTQTPTTTPISTTTTVTPTPTPTGTQTPTSTPITTTTTVTPTPTPTGTQTPTTTPITTTTTVTPTPTPTGTQAPTPTAITTTTTVTPTPTPTGTQTPTTTPITTTTMVTPTPTPTGTQTPTSTPITTTTTVTPTPTPTGTQTPTPTPISTTTTVTPTPTPTGTQTPTTTPITTTTTVTPTPTPTGTQTPTTTPISTTTTVTPTPTPTGTQTPTSTPITTTTTVTPTPTPTGTQTPTPTPITTTTTVTPTPTPTGTQTPTSTPITTTTTVTPTPTPTGTQTPTTTPITTTTTVTPTPTPTGTQSTTLTPITTTTTVTPTPTPTGTQTPTSTPITTTTTVTPTPTPTGTQTPTPTPISTTSTVTPTPTPTGTQTPTMTPITTTTTVTPTPTPTGTQTPTSTPITTTTTVTPTPTPTGTQTPTMTPITTTTTVTPTPTPTGTQAPTPTAITTTTTVTPTPTPTGTQTPTTTPITTTTTVTPTPTPTGTQSTTLTPITTTTTVTPTPTPTGTQTPTPTPISTTTTVTPTPTPTGTQTPTMTPITTTTTVTPTPTPTGTQTPTTTPISTTTTVTPTPTPTGTQTPTTTPITTTTTVTPTPTPTGTQTPTTTPISTTTTVTPTPTPTGTQTPTTTPITTTTTVTPTPTPTGTQTPTTTPISTTTTVTPTPTPTGTQTPTSTPITTTTTVTPTPTPTGTQTPTTTPITTTTTVTPTPTPTGTQAPTPTAITTTSTVTPTPTPTGTQTPTTTPITTTTTVTPTPTPTGTQSPTPTAITTTTTVTPTPTPTGTQTPTLTPITTTTTVTPTPTPTGTQTPTPTPISTTTTVTPTPTPTGTQTPTTTPITTTTTVTPTPTPTGTQTPTTVLITTTTTMTPTPTPTSTKSTTVTPITTTTTVTATPTPTGTQTPTMIPISTTTTVTPTPTPTTGSTGPPTHTSTAPIAELTTSNPPPESSTPQTSRSTSSPLTESTTLLSTLPPAIEMTSTAPPSTPTAPTTTSGGHTLSPPPSTTTSPPGTPTRGTTTGSSSAPTPSTVQTTTTSAWTPTPTPLSTPSIIRTTGLRPYPSSVLICCVLNDTYYAPGEEVYNGTYGDTCYFVNCSLSCTLEFYNWSCPSTPSPTPTPSKSTPTPSKPSSTPSKPTPGTKPPECPDFDPPRQENETWWLCDCFMATCKYNNTVEIVKVECEPPPMPTCSNGLQPVRVEDPDGCCWHWECDCYCTGWGDPHYVTFDGLYYSYQGNCTYVLVEEISPSVDNFGVYIDNYHCDPNDKVSCPRTLIVRHETQEVLIKTVHMMPMQVQVQVNRQAVALPYKKYGLEVYQSGINYVVDIPELGVLVSYNGLSFSVRLPYHRFGNNTKGQCGTCTNTTSDDCILPSGEIVSNCEAAADQWLVNDPSKPHCPHSSSTTKRPAVTVPGGGKTTPHKDCTPSPLCQLIKDSLFAQCHALVPPQHYYDACVFDSCFMPGSSLECASLQAYAALCAQQNICLDWRNHTHGACLVECPSHREYQACGPAEEPTCKSSSSQQNNTVLVEGCFCPEGTMNYAPGFDVCVKTCGCVGPDNVPREFGEHFEFDCKNCVCLEGGSGIICQPKRCSQKPVTHCVEDGTYLATEVNPADTCCNITVCKCNTSLCKEKPSVCPLGFEVKSKMVPGRCCPFYWCESKGVCVHGNAEYQPGSPVYSSKCQDCVCTDKVDNNTLLNVIACTHVPCNTSCSPGFELMEAPGECCKKCEQTHCIIKRPDNQHVILKPGDFKSDPKNNCTFFSCVKIHNQLISSVSNITCPNFDASICIPGSITFMPNGCCKTCTPRNETRVPCSTVPVTTEVSYAGCTKTVLMNHCSGSCGTFVMYSAKAQALDHSCSCCKEEKTSQREVVLSCPNGGSLTHTYTHIESCQCQDTVCGLPTGTSRRARRSPRHLGSG.

An N-terminal signal peptide occupies residues 1–20; the sequence is MGLPLARLAAVCLALSLAGG. Ser-21 carries the phosphoserine modification. His-34 contributes to the Cu(2+) binding site. The 173-residue stretch at 35–207 folds into the VWFD 1 domain; that stretch reads NVCSTWGNFH…KINQPDVVCE (173 aa). 29 disulfide bridges follow: Cys-37–Cys-169, Cys-59–Cys-206, Cys-67–Cys-166, Cys-218–Cys-255, Cys-225–Cys-250, Cys-237–Cys-275, Cys-257–Cys-263, Cys-265–Cys-291, Cys-295–Cys-329, Cys-308–Cys-321, Cys-312–Cys-351, Cys-331–Cys-345, Cys-353–Cys-375, Cys-370–Cys-387, Cys-373–Cys-382, Cys-391–Cys-528, Cys-413–Cys-563, Cys-435–Cys-443, Cys-574–Cys-619, Cys-588–Cys-614, Cys-601–Cys-639, Cys-621–Cys-627, Cys-629–Cys-654, Cys-661–Cys-698, Cys-674–Cys-688, Cys-678–Cys-718, Cys-700–Cys-712, Cys-720–Cys-742, and Cys-740–Cys-749. Asp-49 lines the Ca(2+) pocket. Met-146 and Met-154 together coordinate Cu(+). Cu(2+) is bound at residue Glu-156. Asn-163 carries N-linked (GlcNAc...) asparagine glycosylation. The Ca(2+) site is built by Asp-171, Asn-173, Leu-175, and Glu-180. His-277 contacts Cu(2+). Positions 295–351 constitute a TIL domain; sequence CPGNLVYLESGSPCMDTCSHLEVSSLCEEHRMDGCFCPEGTVYDDIGDSGCVPVSQC. Residue His-324 coordinates Cu(2+). Met-326 contacts Cu(+). One can recognise a VWFD 2 domain in the interval 389 to 564; sequence GTCALEGGSH…NTWKAQSSCH (176 aa). A Ca(2+)-binding site is contributed by Asp-403. An N-linked (GlcNAc...) asparagine glycan is attached at Asn-423. Residues Asn-530, Asn-532, Leu-534, Asp-537, and Asp-538 each coordinate Ca(2+). Asn-670 carries N-linked (GlcNAc...) asparagine glycosylation. Asn-770 carries N-linked (GlcNAc...) asparagine glycosylation. Disulfide bonds link Cys-784–Cys-820, Cys-802–Cys-814, Cys-822–Cys-844, Cys-839–Cys-856, Cys-842–Cys-851, Cys-860–Cys-992, Cys-882–Cys-1027, Cys-891–Cys-989, Cys-909–Cys-916, Cys-1037–Cys-1080, Cys-1051–Cys-1075, Cys-1062–Cys-1102, Cys-1082–Cys-1090, Cys-1092–Cys-1117, Cys-1108–Cys-1137, Cys-1121–Cys-1163, Cys-1145–Cys-1187, Cys-1167–Cys-1181, Cys-1189–Cys-1213, Cys-1208–Cys-1238, and Cys-1211–Cys-1221. Positions 858–1028 constitute a VWFD 3 domain; the sequence is GTCSIYGSGH…NSWKEAPTCP (171 aa). Asp-872 contacts Ca(2+). Asn-894 carries an N-linked (GlcNAc...) asparagine glycan. Ca(2+) contacts are provided by Asn-994, Asp-996, Arg-998, Asn-1001, and Asp-1002. N-linked (GlcNAc...) asparagine glycans are attached at residues Asn-1139 and Asn-1154. Asn-1215, Asn-1230, and Asn-1246 each carry an N-linked (GlcNAc...) asparagine glycan. O-linked (GalNAc) threonine glycosylation is found at Thr-1266, Thr-1267, Thr-1269, Thr-1270, Thr-1272, Thr-1275, Thr-1276, Thr-1281, Thr-1282, and Thr-1287. Residues Ser-1291 and Ser-1292 are each glycosylated (O-linked (GalNAc) serine). O-linked (GalNAc) threonine glycosylation occurs at Thr-1293. The O-linked (GalNAc) serine glycan is linked to Ser-1296. O-linked (GalNAc) threonine glycosylation is present at Thr-1297. Residues Asn-1310, Asp-1312, His-1313, Ser-1316, Asp-1319, Gly-1321, Asp-1322, Glu-1324, Asp-1381, and Tyr-1382 each coordinate Ca(2+). 5 stretches are compositionally biased toward pro residues: residues 1399-1411, 1419-1510, 1520-1549, 1559-1628, and 1638-1679; these read PSPP…PPPT, TTTP…PITP, and TTTP…PPTT. The disordered stretch occupies residues 1399–1773; it reads PSPPTTTPSP…SITPPTFSPF (375 aa). 6 tandem repeats follow at residues 1401–1416, 1417–1432, 1433–1448, 1449–1464, 1465–1471, and 1472–1478. The segment at 1401-1747 is approximate repeats; the sequence is PPTTTPSPPP…SPPTTTMTTL (347 aa). Residues 1479 to 1494 form a 7A repeat; that stretch reads PPTTTPSPPTTTTTTP. A 7B repeat occupies 1495 to 1517; it reads PPTTTPSPPTTTPITPPASTTTL. One copy of the 8A repeat lies at 1518 to 1533; that stretch reads PPTTTPSPPTTTTTTP. An 8B repeat occupies 1534–1556; the sequence is PPTTTPSPPTTTPITPPTSTTTL. One copy of the 9A repeat lies at 1557-1572; it reads PPTTTPSPPPTTTTTP. The stretch at 1573–1596 is one 9B repeat; sequence PPTTTPSPPTTTTPSPPTITTTTP. The 10A repeat unit spans residues 1597 to 1612; sequence PPTTTPSPPTTTTTTP. The 10B repeat unit spans residues 1613–1635; sequence PPTTTPSPPTTTPITPPTSTTTL. One copy of the 11A repeat lies at 1636–1651; sequence PPTTTPSPPPTTTTTP. The stretch at 1652–1675 is one 11B repeat; it reads PPTTTPSPPTTTTPSPPITTTTTP. 5 repeat units span residues 1676-1683, 1684-1699, 1700-1715, 1716-1731, and 1732-1747. Low complexity-rich tracts occupy residues 1680-1720 and 1741-1759; these read TPSS…STTT and TTTM…LTTT. The span at 1760 to 1770 shows a compositional bias: pro residues; the sequence is PLPPSITPPTF. Asn-1787 and Asn-1820 each carry an N-linked (GlcNAc...) asparagine glycan. Composition is skewed to low complexity over residues 1885-2158, 2165-4238, 4269-4315, and 4329-4430; these read MTTT…TMVT, GTQT…QTPT, TTVT…STAP, and STPQ…PSII. Disordered regions lie at residues 1885–4238 and 4269–4430; these read MTTT…QTPT and TTVT…PSII. N-linked (GlcNAc...) asparagine glycans are attached at residues Asn-4449, Asn-4461, Asn-4472, and Asn-4483. A disordered region spans residues 4492–4524; it reads PTPTPSKSTPTPSKPSSTPSKPTPGTKPPECPD. Low complexity predominate over residues 4496 to 4511; sequence PSKSTPTPSKPSSTPS. Over residues 4512-4522 the composition is skewed to pro residues; it reads KPTPGTKPPEC. 3 N-linked (GlcNAc...) asparagine glycosylation sites follow: Asn-4532, Asn-4548, and Asn-4612. Residues 4589–4772 form the VWFD 4 domain; that stretch reads CYCTGWGDPH…VNDPSKPHCP (184 aa). Disulfide bonds link Cys-4591–Cys-4732, Cys-4613–Cys-4771, and Cys-4637–Cys-4645. N-linked (GlcNAc...) asparagine glycosylation is found at Asn-4726 and Asn-4737. A disordered region spans residues 4770–4795; sequence HCPHSSSTTKRPAVTVPGGGKTTPHK. N-linked (GlcNAc...) asparagine glycans are attached at residues Asn-4862, Asn-4897, Asn-4991, Asn-4998, Asn-5065, Asn-5080, Asn-5129, Asn-5148, and Asn-5179. The region spanning 4927–4996 is the VWFC 1 domain; that stretch reads CVGPDNVPRE…DTCCNITVCK (70 aa). The VWFC 2 domain maps to 5034-5101; sequence GVCVHGNAEY…APGECCKKCE (68 aa). 4 cysteine pairs are disulfide-bonded: Cys-5185–Cys-5232, Cys-5199–Cys-5246, Cys-5208–Cys-5262, and Cys-5212–Cys-5264. Residues 5185 to 5270 form the CTCK domain; that stretch reads CSTVPVTTEV…SCQCQDTVCG (86 aa).

Homomultimer; disulfide-linked. The N- and C-terminus mediate their assembly into higher order structures to form filaments. The CTCK domains of two polypeptides associate in the endoplasmic reticulum to generate intermolecularly disulfide-bonded dimers. These dimers progress to the Golgi apparatus, which is a more acidic environment than the endoplasmic reticulum. Under acidic conditions, the N-termini form non-covalent intermolecular interactions that juxtapose assemblies of the third VWD domain (VWD3) from different CTCK-linked dimers. The VWD3 assemblies then become disulfide bonded to one another to produce long, disulfide-linked polymers that remain highly compact until secretion. Interacts with FCGBP. Interacts with AGR2; disulfide-linked. As to quaternary structure, (Microbial infection) Interacts in vitro with L.monocytogenes internalin proteins InlB, InlC and InlJ; for InlC binding is slightly better at pH 5.5, (the pH of the intestine) than at pH 7.4. Post-translationally, O-glycosylated. O-glycosylation is required for mucin assembly. Goblet cells synthesize two forms of mucin that differ in branched chain O-glycosylation and the site of production in the colon. In terms of processing, may undergo proteolytic cleavage in the outer mucus layer of the colon, contributing to the expanded volume and loose nature of this layer which allows for bacterial colonization in contrast to the inner mucus layer which is dense and devoid of bacteria. At low pH of 6 and under, undergoes autocatalytic cleavage in vitro in the N-terminal region of the fourth VWD domain. It is likely that this also occurs in vivo and is triggered by the low pH of the late secretory pathway. As to expression, colon, small intestine, colonic tumors, bronchus, cervix and gall bladder.

The protein localises to the secreted. Functionally, coats the epithelia of the intestines and other mucus membrane-containing organs to provide a protective, lubricating barrier against particles and infectious agents at mucosal surfaces. Major constituent of the colon mucus, which is mainly formed by large polymeric networks of MUC2 secreted by goblet cells that cover the exposed surfaces of intestine. MUC2 networks form hydrogels that guard the underlying epithelium from pathogens and other hazardous matter entering from the outside world, while permitting nutrient absorption and gas exchange. Acts as a divalent copper chaperone that protects intestinal cells from copper toxicity and facilitates nutritional copper unptake into cells. Binds both Cu(2+) and its reduced form, Cu(1+), at two juxtaposed binding sites: Cu(2+), once reduced to Cu(1+) by vitamin C (ascorbate) or other dietary antioxidants, transits to the other binding site. MUC2-bound Cu(1+) is protected from oxidation in aerobic environments, and can be released for nutritional delivery to cells. Mucin gels store antimicrobial molecules that participate in innate immunity. Mucin glycoproteins also house and feed the microbiome, lubricate tissue surfaces, and may facilitate the removal of contaminants and waste products from the body. Goblet cells synthesize two forms of MUC2 mucin that differ in branched chain O-glycosylation and the site of production in the colon: a (1) 'thick' mucus that wraps the microbiota to form fecal pellets is produced in the proximal, ascending colon. 'Thick' mucus transits along the descending colon and is lubricated by a (2) 'thin' MUC2 mucus produced in the distal colon which adheres to the 'thick' mucus. This Homo sapiens (Human) protein is Mucin-2.